The primary structure comprises 910 residues: Epithelial discoidin domain-containing receptor 1 (910 aa).

Residues 1–19 (MGTGTLSSLLLLLLLVTIG) form the signal peptide. Topologically, residues 22-414 (DMKGHFDPAK…VAKAEGSPTA (393 aa)) are extracellular. Positions 32 to 186 (CRYALGMQDR…VCLRVELYGC (155 aa)) constitute an F5/8 type C domain. Cystine bridges form between Cys-32-Cys-186 and Cys-75-Cys-178. The DS-like domain stretch occupies residues 193–368 (LSYTAPVGQT…LFSEISFISD (176 aa)). Asn-212, Gln-231, Asp-234, Val-236, Tyr-254, and Tyr-256 together coordinate Ca(2+). Asn-212 carries N-linked (GlcNAc...) asparagine glycosylation. Asn-261 carries an N-linked (GlcNAc...) asparagine glycan. A disulfide bridge links Cys-304 with Cys-349. 2 residues coordinate Ca(2+): Ser-361 and Glu-362. N-linked (GlcNAc...) asparagine glycosylation is found at Asn-371 and Asn-391. Residues 415–435 (ILIGCLVAIILLLLLIIALML) traverse the membrane as a helical segment. Over 436–910 (WRLHWRRLLS…FLADDALNTV (475 aa)) the chain is Cytoplasmic. The interval 467–494 (ILINNRPGPREPPPYQEPRPRGTPTHSA) is disordered. A PPxY motif motif is present at residues 478 to 481 (PPPY). Phosphotyrosine; by autocatalysis is present on residues Tyr-481, Tyr-510, and Tyr-517. Residues 607–902 (LRFKEKLGEG…PPFSQLHRFL (296 aa)) enclose the Protein kinase domain. Residues 613–621 (LGEGQFGEV) and Lys-652 each bind ATP. Tyr-737 is subject to Phosphotyrosine; by autocatalysis. Catalysis depends on Asp-763, which acts as the Proton acceptor. Tyr-789, Tyr-793, and Tyr-794 each carry phosphotyrosine; by autocatalysis.

It belongs to the protein kinase superfamily. Tyr protein kinase family. Insulin receptor subfamily. Homodimer. Interacts (via PPxY motif) with WWC1 (via WW domains) in a collagen-regulated manner. Forms a tripartite complex with WWC1 and PRKCZ, but predominantly in the absence of collagen. Interacts (tyrosine phosphorylated) with SHC1. Interacts with SRC. Interacts with MYH9. Interacts with CDH1. Interacts with PTPN11. Interacts with NCK2. Post-translationally, autophosphorylated in response to fibrillar collagen binding. As to expression, various embryonic and adult tissues; also proliferative zones of the developing brain; hippocampal neurons.

It localises to the cell membrane. It catalyses the reaction L-tyrosyl-[protein] + ATP = O-phospho-L-tyrosyl-[protein] + ADP + H(+). Functionally, tyrosine kinase that functions as a cell surface receptor for fibrillar collagen and regulates cell attachment to the extracellular matrix, remodeling of the extracellular matrix, cell migration, differentiation, survival and cell proliferation. Collagen binding triggers a signaling pathway that involves SRC and leads to the activation of MAP kinases. Regulates remodeling of the extracellular matrix by up-regulation of the matrix metalloproteinases MMP2, MMP7 and MMP9, and thereby facilitates cell migration and wound healing. Promotes smooth muscle cell migration, and thereby contributes to arterial wound healing. Also plays a role in tumor cell invasion. Phosphorylates PTPN11. Required for normal blastocyst implantation during pregnancy, for normal mammary gland differentiation and normal lactation. Required for normal ear morphology and normal hearing. The protein is Epithelial discoidin domain-containing receptor 1 (Ddr1) of Rattus norvegicus (Rat).